The following is a 216-amino-acid chain: Peptide methionine sulfoxide reductase MsrA (216 aa).

C54 is a catalytic residue.

The protein belongs to the MsrA Met sulfoxide reductase family.

It catalyses the reaction L-methionyl-[protein] + [thioredoxin]-disulfide + H2O = L-methionyl-(S)-S-oxide-[protein] + [thioredoxin]-dithiol. It carries out the reaction [thioredoxin]-disulfide + L-methionine + H2O = L-methionine (S)-S-oxide + [thioredoxin]-dithiol. Functionally, has an important function as a repair enzyme for proteins that have been inactivated by oxidation. Catalyzes the reversible oxidation-reduction of methionine sulfoxide in proteins to methionine. In Xanthomonas campestris pv. campestris (strain ATCC 33913 / DSM 3586 / NCPPB 528 / LMG 568 / P 25), this protein is Peptide methionine sulfoxide reductase MsrA.